The sequence spans 295 residues: ATP synthase subunit a (295 aa).

The next 7 membrane-spanning stretches (helical) occupy residues 41-61, 101-121, 129-149, 161-181, 191-211, 222-242, and 244-264; these read KWSA…WLGF, YLTI…IPVA, IALP…VGIR, LVPA…IEFV, LAIR…VFAL, FVFG…ELMI, and VLQA…AISS.

The protein belongs to the ATPase A chain family. F-type ATPases have 2 components, CF(1) - the catalytic core - and CF(0) - the membrane proton channel. CF(1) has five subunits: alpha(3), beta(3), gamma(1), delta(1), epsilon(1). CF(0) has three main subunits: a(1), b(2) and c(9-12). The alpha and beta chains form an alternating ring which encloses part of the gamma chain. CF(1) is attached to CF(0) by a central stalk formed by the gamma and epsilon chains, while a peripheral stalk is formed by the delta and b chains.

It is found in the cell membrane. In terms of biological role, key component of the proton channel; it plays a direct role in the translocation of protons across the membrane. The sequence is that of ATP synthase subunit a from Parafrankia sp. (strain EAN1pec).